The following is a 530-amino-acid chain: DNA damage-binding protein cmr1 (530 aa).

Disordered regions lie at residues 34 to 115 (VGLF…RKSD) and 224 to 250 (TKPVSAATHDEDEEDDDDDPDPVLTTL). Residues 52–62 (AKKKKPAPKKV) show a composition bias toward basic residues. Positions 89–108 (EVAKRKADEHDAALQEAERA) are enriched in basic and acidic residues. One copy of the WD 1 repeat lies at 188–229 (LTPERIYAMTFHPSESKPLIFAGDKMGHLGVLDASQTKPVSA). Over residues 233-244 (DEDEEDDDDDPD) the composition is skewed to acidic residues. WD repeat units lie at residues 252-292 (PHTR…SVER), 302-339 (VPISGLDMALDDPHCLYWTTLDGEFGRYDMRTPRQDSA), 344-384 (LSDK…HKSP), 389-430 (EHES…ASWK), 453-496 (GRWV…LAQL), and 499-530 (DGITAVPAVAVFHRSKNWVAGGTASGKICLWM).

This sequence belongs to the WD repeat DDB2/WDR76 family.

Functionally, DNA-binding protein that binds to both single- and double-stranded DNA. Binds preferentially to UV-damaged DNA. May be involved in DNA-metabolic processes. This chain is DNA damage-binding protein cmr1, found in Aspergillus terreus (strain NIH 2624 / FGSC A1156).